The chain runs to 324 residues: Lipid droplet-associated hydrolase (324 aa).

Serine 136 acts as the Nucleophile in catalysis. Residues aspartate 270 and histidine 299 each act as charge relay system in the active site.

This sequence belongs to the AB hydrolase superfamily. LDAH family.

The protein localises to the lipid droplet. It localises to the endoplasmic reticulum. It catalyses the reaction a cholesterol ester + H2O = cholesterol + a fatty acid + H(+). Its function is as follows. Probable serine lipid hydrolase associated with lipid droplets. Has low cholesterol esterase activity. Appears to lack triglyceride lipase activity. Involved in cholesterol and triglyceride homeostasis; stimulates cellular triglyceride accumulation and cellular cholesterol release. The chain is Lipid droplet-associated hydrolase from Gallus gallus (Chicken).